Reading from the N-terminus, the 394-residue chain is Na(+)/H(+) antiporter NhaA (394 aa).

The next 11 membrane-spanning stretches (helical) occupy residues 14–34, 59–79, 95–115, 125–145, 154–174, 179–199, 213–233, 254–274, 292–312, 328–348, and 363–383; these read AGGLILIIAAAIALLMANSAL, LLLWINDGLMAVFFLMIGLEV, VFPAIAALGGMLAPALIYLLF, GWAIPAATDIAFALGVMALLG, VFLLALAIIDDLGVIIIIALF, VSLQSLGIAAAAIALLAYMNW, LVLWVCILKSGVHATLAGVIV, GLHPWVAYLILPLFAFANAGV, IATGLFIGKPLGIFTFSWLAV, IFAVSVLCGIGFTMSIFIASL, and LGILLGSTTAAVVGYSLLRLV.

The protein belongs to the NhaA Na(+)/H(+) (TC 2.A.33) antiporter family.

It localises to the cell inner membrane. It carries out the reaction Na(+)(in) + 2 H(+)(out) = Na(+)(out) + 2 H(+)(in). Functionally, na(+)/H(+) antiporter that extrudes sodium in exchange for external protons. In Yersinia pestis bv. Antiqua (strain Angola), this protein is Na(+)/H(+) antiporter NhaA.